Reading from the N-terminus, the 365-residue chain is tRNA(Met) cytidine acetate ligase (365 aa).

Residues 7–20 (IAEF…HKYL), Gly-96, Asn-152, and Arg-175 each bind ATP.

The protein belongs to the TmcAL family.

The protein localises to the cytoplasm. It carries out the reaction cytidine(34) in elongator tRNA(Met) + acetate + ATP = N(4)-acetylcytidine(34) in elongator tRNA(Met) + AMP + diphosphate. Its function is as follows. Catalyzes the formation of N(4)-acetylcytidine (ac(4)C) at the wobble position of elongator tRNA(Met), using acetate and ATP as substrates. First activates an acetate ion to form acetyladenylate (Ac-AMP) and then transfers the acetyl group to tRNA to form ac(4)C34. In Streptococcus pneumoniae (strain ATCC BAA-255 / R6), this protein is tRNA(Met) cytidine acetate ligase.